A 485-amino-acid polypeptide reads, in one-letter code: N-succinylglutamate 5-semialdehyde dehydrogenase (485 aa).

220-225 (GSANTG) lines the NAD(+) pocket. Residues Glu-243 and Cys-278 contribute to the active site.

The protein belongs to the aldehyde dehydrogenase family. AstD subfamily.

It carries out the reaction N-succinyl-L-glutamate 5-semialdehyde + NAD(+) + H2O = N-succinyl-L-glutamate + NADH + 2 H(+). It participates in amino-acid degradation; L-arginine degradation via AST pathway; L-glutamate and succinate from L-arginine: step 4/5. Catalyzes the NAD-dependent reduction of succinylglutamate semialdehyde into succinylglutamate. In Aliivibrio salmonicida (strain LFI1238) (Vibrio salmonicida (strain LFI1238)), this protein is N-succinylglutamate 5-semialdehyde dehydrogenase.